Consider the following 269-residue polypeptide: Autophagy-related protein 5 (269 aa).

Lysine 102 is covalently cross-linked (Glycyl lysine isopeptide (Lys-Gly) (interchain with G-Cter in ATG12)).

This sequence belongs to the ATG5 family. Conjugated with ATG12. The ATG5-ATG12 conjugate forms a complex with several units of ATG16. The ATG12-ATG5 conjugate also associates with ATG3. In terms of processing, conjugated to ATG12; which is essential for autophagy. Conjugation with ATG12 involves ATG7 as an E1-like activating enzyme and ATG10 as an E2-like conjugating enzyme.

Its subcellular location is the preautophagosomal structure membrane. In terms of biological role, involved in cytoplasm to vacuole transport (Cvt) and autophagic vesicle formation. Autophagy is essential for maintenance of amino acid levels and protein synthesis under nitrogen starvation. Required for selective autophagic degradation of the nucleus (nucleophagy). Also required for mitophagy, which eliminates defective or superfluous mitochondria in order to fulfill cellular energy requirements and prevent excess ROS production. Conjugation with ATG12, through a ubiquitin-like conjugating system involving ATG7 as an E1-like activating enzyme and ATG10 as an E2-like conjugating enzyme, is essential for its function. The ATG12-ATG5 conjugate acts as an E3-like enzyme which is required for lipidation of ATG8 and ATG8 association to the vesicle membranes. ATG12-ATG5 rearranges the ATG3 catalytic center and enhances its E2 activity. Required for proper vegetative growth, asexual/sexual reproduction, but, unlike several plant and animal pathogenic fungi, where ATG5 is required for infection, in B.bassiana it is dispensable for pathogenesis. In Beauveria bassiana (strain ARSEF 2860) (White muscardine disease fungus), this protein is Autophagy-related protein 5.